A 350-amino-acid polypeptide reads, in one-letter code: Cephaeline 6'-O-methyltransferase IpeOMT1 (350 aa).

S-adenosyl-L-methionine is bound by residues Gly193, Asp216, Asp236, Met237, and Lys250. The active-site Proton acceptor is the His254.

It belongs to the class I-like SAM-binding methyltransferase superfamily. Cation-independent O-methyltransferase family. Expressed in roots.

It is found in the cytoplasm. Its subcellular location is the cytosol. It catalyses the reaction cephaeline + S-adenosyl-L-methionine = emetine + S-adenosyl-L-homocysteine + H(+). The enzyme catalyses deacetylisoipecoside + S-adenosyl-L-methionine = 6-O-methyldeacetylisoipecoside + S-adenosyl-L-homocysteine + H(+). The catalysed reaction is 7-O-methyldeacetylisoipecoside + S-adenosyl-L-methionine = 6,7-O,O-dimethyldeacetylisoipecoside + S-adenosyl-L-homocysteine + H(+). It carries out the reaction norcoclaurine + S-adenosyl-L-methionine = coclaurine + S-adenosyl-L-homocysteine + H(+). It catalyses the reaction (S)-norprotosinomenine + S-adenosyl-L-methionine = (S)-6-O-methylnorprotosinomenine + S-adenosyl-L-homocysteine + H(+). The enzyme catalyses (R)-norprotosinomenine + S-adenosyl-L-methionine = (R)-6-O-methylnorprotosinomenine + S-adenosyl-L-homocysteine + H(+). Its pathway is alkaloid biosynthesis. Functionally, O-methyltransferase involved in the biosynthesis of ipecac and benzylisoquinoline monoterpenoid-isoquinoline alkaloids natural products, starting by the condensation of dopamine and secologanin, and including emetine and cephaeline, drugs used both as anti-protozoal (e.g. treatment of ameobiasis) and as emetic agents. Mediates cephaeline 6'-O-methylation to produce emetine. Catalyzes the 6-O-methylation of N-deacetylisoipecoside, 7-O-methyl-N-deacetylisoipecoside, isococlaurine, norcoclaurine, (S)-norprotosinomenine and (R)-norprotosinomenine, and, with a lower efficiency, of 4'-O-methyllaudanosoline, isoorientaline and protosinomenine. Supports also the 4'-O-methylation of nororientaline. This Carapichea ipecacuanha (Ipecac) protein is Cephaeline 6'-O-methyltransferase IpeOMT1.